A 592-amino-acid chain; its full sequence is V-type ATP synthase alpha chain (592 aa).

232 to 239 (GPFGAGKT) provides a ligand contact to ATP.

It belongs to the ATPase alpha/beta chains family.

The catalysed reaction is ATP + H2O + 4 H(+)(in) = ADP + phosphate + 5 H(+)(out). In terms of biological role, produces ATP from ADP in the presence of a proton gradient across the membrane. The V-type alpha chain is a catalytic subunit. This is V-type ATP synthase alpha chain from Clostridium botulinum (strain Eklund 17B / Type B).